Consider the following 265-residue polypeptide: Homeobox protein CDX-1 (265 aa).

The segment at 9 to 152 (KDSPVYPGPA…GGGGVSGKTR (144 aa)) is disordered. Positions 30–43 (YGPPAPPPAPPQYP) are enriched in pro residues. The segment covering 73–92 (AAAYGPGPAAPAASPASLAF) has biased composition (low complexity). A compositionally biased stretch (pro residues) spans 93 to 108 (GPPPDFSPVPAPPGPG). Low complexity predominate over residues 110 to 126 (GLLAQPLGGPGTPSSPG). Positions 154 to 213 (KDKYRVVYTDHQRLELEKEFHYSRYITIRRKSELAANLGLTERQVKIWFQNRRAKERKVN) form a DNA-binding region, homeobox. The segment at 157 to 178 (YRVVYTDHQRLELEKEFHYSRY) is interaction with DNA. The tract at residues 196-207 (RQVKIWFQNRRA) is interaction with 5-mCpG DNA. The span at 206–217 (RAKERKVNKKKQ) shows a compositional bias: basic residues. The disordered stretch occupies residues 206 to 265 (RAKERKVNKKKQQQQQPPQPPTAHDITATPARPSLGGLCPSNTSLLATSSPMPVKEEFLP). Polar residues predominate over residues 245 to 256 (PSNTSLLATSSP).

The protein belongs to the Caudal homeobox family.

Its subcellular location is the nucleus. Plays a role in transcriptional regulation. Involved in activated KRAS-mediated transcriptional activation of PRKD1 in colorectal cancer (CRC) cells. Binds to the PRKD1 promoter in colorectal cancer (CRC) cells. Could play a role in the terminal differentiation of the intestine. Binds preferentially to methylated DNA. In Pongo pygmaeus (Bornean orangutan), this protein is Homeobox protein CDX-1 (CDX1).